A 219-amino-acid chain; its full sequence is Ribonuclease HII (219 aa).

The region spanning 22–219 (GLVAGVDEVG…LLAMRMEAVV (198 aa)) is the RNase H type-2 domain. Positions 28, 29, and 125 each coordinate a divalent metal cation.

The protein belongs to the RNase HII family. Mn(2+) serves as cofactor. Mg(2+) is required as a cofactor.

The protein resides in the cytoplasm. The enzyme catalyses Endonucleolytic cleavage to 5'-phosphomonoester.. Its function is as follows. Endonuclease that specifically degrades the RNA of RNA-DNA hybrids. The sequence is that of Ribonuclease HII from Granulibacter bethesdensis (strain ATCC BAA-1260 / CGDNIH1).